We begin with the raw amino-acid sequence, 340 residues long: Cytochrome c oxidase subunit 1 (340 aa).

Residues 18 to 38 (MCYLLVAILCGFLGYIYSLFI) traverse the membrane as a helical segment. The Ca(2+) site is built by glutamate 41 and glycine 46. The helical transmembrane segment at 42 to 62 (LSIIGCGVLFGDYQYYNVLVT) threads the bilayer. Histidine 64 serves as a coordination point for Fe(II)-heme a. A run of 7 helical transmembrane segments spans residues 66-86 (LVMVFAFIMPVMMGGLVNYFV), 100-120 (LNNMSFWMFMGGFGALVSGLL), 148-168 (FTVFAVHLLGVSSILNSINLL), 186-206 (LFIWGSLITALLLIITLPVLA), 237-257 (LFWFFGHPEVYIIIIPVFGLI), 279-299 (MILIAILGFFVWAHHMFVVGM), and 305-325 (AYFGSVTVLIGLPTCIKLFNW). Cu cation is bound at residue histidine 243. A cross-link (1'-histidyl-3'-tyrosine (His-Tyr)) is located at residues 243 to 247 (HPEVY). Tyrosine 247 lines the O2 pocket. Cu cation contacts are provided by histidine 292 and histidine 293.

The protein belongs to the heme-copper respiratory oxidase family. In terms of assembly, component of the cytochrome c oxidase (complex IV, CIV), a multisubunit enzyme composed of a catalytic core of 3 subunits and several supernumerary subunits. The complex exists as a monomer or a dimer and forms supercomplexes (SCs) in the inner mitochondrial membrane with ubiquinol-cytochrome c oxidoreductase (cytochrome b-c1 complex, complex III, CIII). It depends on heme as a cofactor. The cofactor is Cu cation.

It is found in the mitochondrion inner membrane. The catalysed reaction is 4 Fe(II)-[cytochrome c] + O2 + 8 H(+)(in) = 4 Fe(III)-[cytochrome c] + 2 H2O + 4 H(+)(out). It functions in the pathway energy metabolism; oxidative phosphorylation. Functionally, component of the cytochrome c oxidase, the last enzyme in the mitochondrial electron transport chain which drives oxidative phosphorylation. The respiratory chain contains 3 multisubunit complexes succinate dehydrogenase (complex II, CII), ubiquinol-cytochrome c oxidoreductase (cytochrome b-c1 complex, complex III, CIII) and cytochrome c oxidase (complex IV, CIV), that cooperate to transfer electrons derived from NADH and succinate to molecular oxygen, creating an electrochemical gradient over the inner membrane that drives transmembrane transport and the ATP synthase. Cytochrome c oxidase is the component of the respiratory chain that catalyzes the reduction of oxygen to water. Electrons originating from reduced cytochrome c in the intermembrane space (IMS) are transferred via the dinuclear copper A center (CU(A)) of subunit 2 and heme A of subunit 1 to the active site in subunit 1, a binuclear center (BNC) formed by heme A3 and copper B (CU(B)). The BNC reduces molecular oxygen to 2 water molecules using 4 electrons from cytochrome c in the IMS and 4 protons from the mitochondrial matrix. The sequence is that of Cytochrome c oxidase subunit 1 (COI) from Strigomonas oncopelti (Parasitic flagellate).